The chain runs to 206 residues: Glycerol-3-phosphate acyltransferase (206 aa).

5 helical membrane-spanning segments follow: residues 3-23, 51-71, 83-103, 113-133, and 162-182; these read LGWL…SYII, VGPA…AVVV, FAAA…YYGF, IGVL…IAIG, and WFGY…LSMW.

Belongs to the PlsY family. Probably interacts with PlsX.

It localises to the cell membrane. It carries out the reaction an acyl phosphate + sn-glycerol 3-phosphate = a 1-acyl-sn-glycero-3-phosphate + phosphate. It functions in the pathway lipid metabolism; phospholipid metabolism. In terms of biological role, catalyzes the transfer of an acyl group from acyl-phosphate (acyl-PO(4)) to glycerol-3-phosphate (G3P) to form lysophosphatidic acid (LPA). This enzyme utilizes acyl-phosphate as fatty acyl donor, but not acyl-CoA or acyl-ACP. This is Glycerol-3-phosphate acyltransferase from Halalkalibacterium halodurans (strain ATCC BAA-125 / DSM 18197 / FERM 7344 / JCM 9153 / C-125) (Bacillus halodurans).